We begin with the raw amino-acid sequence, 296 residues long: Ribosomal protein L11 methyltransferase (296 aa).

Residues Thr151, Gly172, Asp194, and Asn233 each coordinate S-adenosyl-L-methionine.

This sequence belongs to the methyltransferase superfamily. PrmA family.

The protein localises to the cytoplasm. The catalysed reaction is L-lysyl-[protein] + 3 S-adenosyl-L-methionine = N(6),N(6),N(6)-trimethyl-L-lysyl-[protein] + 3 S-adenosyl-L-homocysteine + 3 H(+). Its function is as follows. Methylates ribosomal protein L11. This Thiobacillus denitrificans (strain ATCC 25259 / T1) protein is Ribosomal protein L11 methyltransferase.